Reading from the N-terminus, the 297-residue chain is Adrenocorticotropic hormone receptor (297 aa).

Residues 1–23 lie on the Extracellular side of the membrane; the sequence is MKHIIHASGNVNGTARNNSDCPH. 2 N-linked (GlcNAc...) asparagine glycosylation sites follow: Asn12 and Asn17. 2 disulfide bridges follow: Cys21-Cys253 and Cys245-Cys251. Residues 24–49 form a helical membrane-spanning segment; that stretch reads VALPEEIFFIISITGVLENLIIILAV. Residues 50 to 58 lie on the Cytoplasmic side of the membrane; the sequence is IKNKNLQFP. Residues 59–79 traverse the membrane as a helical segment; that stretch reads MYFFICSLAISDMLGSLYKIL. Over 80 to 104 the chain is Extracellular; the sequence is ESILIMFRNMGYFKPHGSFETTTDD. The helical transmembrane segment at 105-126 threads the bilayer; sequence IIDTMFILSLLGSIFSLLAIAV. Topologically, residues 127-147 are cytoplasmic; that stretch reads DRYITIFHALQYHSIVTMHRT. A helical membrane pass occupies residues 148-168; it reads IAVLSIIWTFCIGSGITMVLF. At 169–180 the chain is on the extracellular side; the sequence is SHHVPTVLTFTS. The chain crosses the membrane as a helical span at residues 181–199; the sequence is LFPLMLVFILCLYVHMFLM. Residues 200–217 are Cytoplasmic-facing; it reads ARSHARNISTLPRGNMRG. A helical membrane pass occupies residues 218–244; that stretch reads AITLTILLGVFIFCWAPFILHILLVTF. Residues 245 to 256 are Extracellular-facing; it reads CPNNPYCTCYIS. Residues 257–278 traverse the membrane as a helical segment; the sequence is LFHVNGMLIMCNAVIDPFIYAF. Residues 279-297 are Cytoplasmic-facing; the sequence is RSPELRSAFRRMISYSKCL. Cys296 carries S-palmitoyl cysteine lipidation.

This sequence belongs to the G-protein coupled receptor 1 family. In terms of assembly, homodimer. Interacts with corticotropin (ACTH). Interacts with MRAP; this interaction targets MC2R to the plasma membrane. Interacts with MRAP2; competing with MRAP for binding to MC2R and impairing the binding of corticotropin (ACTH). Post-translationally, ubiquitinated by MGRN1 that may be involved in post-endocytic trafficking and/or degradation of internalized receptor.

The protein resides in the cell membrane. Its function is as follows. Hormone receptor primarily expressed in adrenal cortex that plays a key role in regulating adrenocortical function. Upon corticotropin (ACTH) binding, facilitates the release of adrenal glucocorticoids, including cortisol and corticosterone. In addition, MC2R is required for fetal and neonatal adrenal gland development. Mechanistically, activates adenylate cyclase (cAMP), the MAPK cascade as well as the cAMP-dependent protein kinase A pathway leading to steroidogenic factor 1/NR5A1-mediated transcriptional activation. The chain is Adrenocorticotropic hormone receptor (MC2R) from Cavia porcellus (Guinea pig).